Consider the following 464-residue polypeptide: Delta(5) fatty acid desaturase A (464 aa).

Residues 13-90 (GKQYSWSELA…LKNYEIGYIS (78 aa)) enclose the Cytochrome b5 heme-binding domain. H48 and H71 together coordinate heme. The next 2 helical transmembrane spans lie at 125–145 (AVSI…TYYL) and 153–173 (FYLN…FSMH). The Histidine box-1 signature appears at 176 to 180 (HDSCH). Residues 212–217 (HVIGHH) carry the Histidine box-2 motif. The chain crosses the membrane as a helical span at residues 318-338 (FTDLICYFLIAEFVFGWYLTI). Residues 396–400 (QVVHH) carry the Histidine box-3 motif.

The protein belongs to the fatty acid desaturase type 1 family. Fe cation serves as cofactor.

The protein localises to the membrane. In terms of biological role, specific for desaturation of the 5 position in C16 and C18 fatty acids. In Dictyostelium discoideum (Social amoeba), this protein is Delta(5) fatty acid desaturase A (fadA).